The primary structure comprises 611 residues: ATP-dependent zinc metalloprotease FtsH (611 aa).

Position 1 (Met-1) is a topological domain, cytoplasmic. The chain crosses the membrane as a helical span at residues 2 to 22 (VKNLIFWLVITVVLMSIFQNF). Over 23–98 (NTNDVNNHKV…IGAIPEEPSL (76 aa)) the chain is Extracellular. A helical membrane pass occupies residues 99–119 (FISILISWFPMLLLIGVWIFF). The Cytoplasmic segment spans residues 120 to 611 (MRQMQMGGGK…KGWIETDTNK (492 aa)). Residue 192 to 199 (GPPGTGKT) participates in ATP binding. His-414 lines the Zn(2+) pocket. Residue Glu-415 is part of the active site. Positions 418 and 492 each coordinate Zn(2+).

It in the central section; belongs to the AAA ATPase family. This sequence in the C-terminal section; belongs to the peptidase M41 family. Homohexamer. Zn(2+) serves as cofactor.

Its subcellular location is the cell membrane. Acts as a processive, ATP-dependent zinc metallopeptidase for both cytoplasmic and membrane proteins. Plays a role in the quality control of integral membrane proteins. This Buchnera aphidicola subsp. Acyrthosiphon pisum (strain APS) (Acyrthosiphon pisum symbiotic bacterium) protein is ATP-dependent zinc metalloprotease FtsH.